The sequence spans 491 residues: Eupatolide synthase (491 aa).

The helical; Signal-anchor for type II membrane protein transmembrane segment at Leu-7–Trp-27 threads the bilayer. Cys-430 lines the heme pocket.

This sequence belongs to the cytochrome P450 family. Heme serves as cofactor. As to expression, expressed in leaf primordia.

It localises to the membrane. It catalyses the reaction 8beta-hydroxygermacra-1(10),4,11(13)-trien-12-oate + reduced [NADPH--hemoprotein reductase] + O2 = eupatolide + oxidized [NADPH--hemoprotein reductase] + 2 H2O. It participates in secondary metabolite biosynthesis; terpenoid biosynthesis. Functionally, involved in the biosynthesis of germacrene-derived sesquiterpene lactones. Hydroxylates 8-beta-hydroxy-germacrene A acid to 6-alpha,8-beta-hydroxy-germacrene A acid, which, in turn, undergo spontaneous lactonization to become eupatolide. This chain is Eupatolide synthase, found in Helianthus annuus (Common sunflower).